The following is a 232-amino-acid chain: 7-cyano-7-deazaguanine synthase (232 aa).

8 to 18 (LSGGLDSATVL) contributes to the ATP binding site. Residues Cys188, Cys198, Cys201, and Cys204 each contribute to the Zn(2+) site.

Belongs to the QueC family. Zn(2+) is required as a cofactor.

The enzyme catalyses 7-carboxy-7-deazaguanine + NH4(+) + ATP = 7-cyano-7-deazaguanine + ADP + phosphate + H2O + H(+). It functions in the pathway purine metabolism; 7-cyano-7-deazaguanine biosynthesis. Functionally, catalyzes the ATP-dependent conversion of 7-carboxy-7-deazaguanine (CDG) to 7-cyano-7-deazaguanine (preQ(0)). This chain is 7-cyano-7-deazaguanine synthase, found in Nitrosospira multiformis (strain ATCC 25196 / NCIMB 11849 / C 71).